Consider the following 362-residue polypeptide: MPDSTADPSTADEVLARLHFDLPEDRIAQTGAEPRDTSRLMVVGEQIKHRMFRDLPDLLRPSDLLVFNESRVIPARVLARKPVVNGFGGGQVEVLLLREEFDVGANVWSAYLKPAKRAGHELWLGENEATGHRAEVVGVLDDGARLLRFDHDIKPHLDEIGRLPLPPYINAGDSDETWRERYQTVYAKTPGSVAAPTAGLHFTPELLARLDEMGVERASVTLHVGAGTFKPIQGPVADHVMHAERYEVSETNAAAITRAKAEGRRVVAVGTTTVRTLESAWDGAAVRAGAGETRIFITPGTRVEVPDLLITNLHLPGSTLLLLVAAFAGEDRIRAAYDAALSQDYRFYSLGDAMLLERLTSA.

This sequence belongs to the QueA family. As to quaternary structure, monomer.

Its subcellular location is the cytoplasm. It catalyses the reaction 7-aminomethyl-7-carbaguanosine(34) in tRNA + S-adenosyl-L-methionine = epoxyqueuosine(34) in tRNA + adenine + L-methionine + 2 H(+). It participates in tRNA modification; tRNA-queuosine biosynthesis. Functionally, transfers and isomerizes the ribose moiety from AdoMet to the 7-aminomethyl group of 7-deazaguanine (preQ1-tRNA) to give epoxyqueuosine (oQ-tRNA). The chain is S-adenosylmethionine:tRNA ribosyltransferase-isomerase from Deinococcus radiodurans (strain ATCC 13939 / DSM 20539 / JCM 16871 / CCUG 27074 / LMG 4051 / NBRC 15346 / NCIMB 9279 / VKM B-1422 / R1).